A 265-amino-acid chain; its full sequence is Short chain dehydrogenase mdpC (265 aa).

Residues I25, N98, and R131 each coordinate NADP(+). Active-site proton donor residues include S147 and S148. Y162, K166, and T197 together coordinate NADP(+). The active-site Proton acceptor is Y162. The active-site Lowers pKa of active site Tyr is K166.

Belongs to the short-chain dehydrogenases/reductases (SDR) family.

It catalyses the reaction 3,8,9,10-tetrahydroxy-6-methyl-1,4-dihydroanthracen-1-one + NADPH + H(+) = (3R)-3,8,9,10-tetrahydroxy-6-methyl-1,2,3,4-tetrahydroanthracen-1-one + NADP(+). It functions in the pathway secondary metabolite biosynthesis. Functionally, short chain dehydrogenase; part of the gene cluster that mediates the biosynthesis of monodictyphenone, a prenyl xanthone derivative. The pathway begins with the synthesis of atrochrysone thioester by the polyketide synthase (PKS) mdpG. The atrochrysone carboxyl ACP thioesterase mdpF then breaks the thioester bond and releases the atrochrysone carboxylic acid from mdpG. The atrochrysone carboxylic acid is then converted to atrochrysone which is further transformed into emodin anthrone. The next step is performed by the anthrone oxygenase mdpH that catalyzes the oxidation of emodinanthrone to emodin. Emodin is further modified to yield monodictyphenone via several steps involving mdpB, mdpC mdpJ, mdpK and mdpL. The short chain dehydrogenase mdpC converts the tautomers of emodin hydroquinone into the 3-hydroxy-3,4-dihydroan-thracen-1(2H)-one derivative. These enzymes with xptA, xptB and xptC are also proposed to be involved in the synthesis of shamixanthone from emodin. Especially, direct reduction of emodin by the short chain dehydrogenase mdpC followed by dehydration catalyzed by the scytalone dehydratase-like protein mdpB gives loss of oxygen and formation of chrysophanol intermediate in two simple steps. This Emericella nidulans (strain FGSC A4 / ATCC 38163 / CBS 112.46 / NRRL 194 / M139) (Aspergillus nidulans) protein is Short chain dehydrogenase mdpC.